Reading from the N-terminus, the 381-residue chain is Putative F-box protein At4g17200 (381 aa).

Residues 1-47 enclose the F-box domain; that stretch reads MTTMSDLSPDLVGEILTRVPMTSLISVRCTCKMWNALSKEGIFFKAA.

The sequence is that of Putative F-box protein At4g17200 from Arabidopsis thaliana (Mouse-ear cress).